The following is a 544-amino-acid chain: Protein angel homolog 2 (544 aa).

It belongs to the CCR4/nocturin family.

The sequence is that of Protein angel homolog 2 (Angel2) from Mus musculus (Mouse).